Consider the following 539-residue polypeptide: Tripartite motif-containing protein 26 (539 aa).

The segment at 16 to 57 (CSICLDYLRDPVTIDCGHVFCRSCTTDVRPISGSRPVCPLCK) adopts an RING-type zinc-finger fold. Residues 97-138 (QDAKLCERHREKLHYYCEDDGKLLCVMCRESREHRPHTAVLM) form a B box-type zinc finger. The Zn(2+) site is built by Cys-102, His-105, Cys-124, and His-130. A coiled-coil region spans residues 188–227 (IVAEFEQGHQFLREREEHLLEQLAKLEQELTEGREKFKSR). The B30.2/SPRY domain occupies 295 to 539 (RGLREFQGKL…WPGTRLLLRP (245 aa)). The segment at 376–437 (REGWSEDEEE…EEEEEVLESC (62 aa)) is disordered. Over residues 380–434 (SEDEEEGDEEEEGEEEEEEEEAGYGDGYDDWETDEDEESLGDEEEEEEEEEEEVL) the composition is skewed to acidic residues.

It belongs to the TRIM/RBCC family. In terms of assembly, interacts with TBK1; this interaction bridges together TBK1 and NEMO in order to activate TBK1. Interacts with INCA1. Post-translationally, autoubiquitinates upon viral infection. In turn, autoubiquitinated TRIM26 recruits NEMO and bridges TBK1-NEMO interaction.

It localises to the cytoplasm. The protein localises to the nucleus. The enzyme catalyses S-ubiquitinyl-[E2 ubiquitin-conjugating enzyme]-L-cysteine + [acceptor protein]-L-lysine = [E2 ubiquitin-conjugating enzyme]-L-cysteine + N(6)-ubiquitinyl-[acceptor protein]-L-lysine.. Its function is as follows. E3 ubiquitin-protein ligase which regulates the IFN-beta production and antiviral response downstream of various DNA-encoded pattern-recognition receptors (PRRs). Also plays a central role in determining the response to different forms of oxidative stress by controlling levels of DNA glycosylases NEIL1, NEIL3 and NTH1 that are involved in repair of damaged DNA. Promotes nuclear IRF3 ubiquitination and proteasomal degradation. Bridges together TBK1 and NEMO during the innate response to viral infection leading to the activation of TBK1. Positively regulates LPS-mediated inflammatory innate immune response by catalyzing the 'Lys-11'-linked polyubiquitination of TAB1 to enhance its activation and subsequent NF-kappa-B and MAPK signaling. In a manner independent of its catalytic activity, inhibits WWP2, a SOX2-directed E3 ubiquitin ligase, and thus protects SOX2 from polyubiquitination and proteasomal degradation. Ubiquitinates the histone acetyltransferase protein complex component PHF20 and thereby triggers its degradation in the nucleus after its recruitment by the histone demethylase KDM6B, serving as a scaffold protein. Upon induction by TGF-beta, ubiquitinates the TFIID component TAF7 for proteasomal degradation. Induces ferroptosis by ubiquitinating SLC7A11, a critical protein for lipid reactive oxygen species (ROS) scavenging. The sequence is that of Tripartite motif-containing protein 26 (TRIM26) from Pan troglodytes (Chimpanzee).